Reading from the N-terminus, the 497-residue chain is Putative zinc finger and SCAN domain-containing protein 5D (497 aa).

Residues 41–123 (KAGRRMFSCP…DLLRNNRRPK (83 aa)) enclose the SCAN box domain. The interval 148–342 (PASVRDDPRG…GPAGAVSHPN (195 aa)) is disordered. Positions 158-167 (VSSQRASSVN) are enriched in polar residues. Composition is skewed to basic and acidic residues over residues 216–229 (PTLEKDLNVDREEN) and 249–259 (KEGKEPKKRAS). 5 C2H2-type zinc fingers span residues 352–374 (FACGVCNKRFTCNSKLAIHMRSH), 380–402 (FQCNFCERCFTQLSDLRVHQRIH), 408–430 (YTCDICHKRFNRMFSLKCHKRSH), 436–458 (YKCKDCNQVFTYRKNLNEHKLIH), and 464–486 (YKCPKCLRAFRRPETLKYHQKTH).

The protein localises to the nucleus. This chain is Putative zinc finger and SCAN domain-containing protein 5D, found in Homo sapiens (Human).